The sequence spans 547 residues: MRVNLLIAMIIFALIWPVTALRAAVSKTTWADAPAREFVFVENNSDDNFFVTPGGALDPRLTGANRWTGLKYNGSGTIYQQSLGYIDNGYNTGLYTNWKFDMWLENSPVSSPLTGLRCINWYAGCNMTTSLILPQTTDTSGFYGATVTSGGAKWMHGMLSDAFYQYLQQMPVGSSFTMTINACQTSVNYDASSGARCKDQASGNWYVRNVTHTKAANLRLINTHSLAEVFINSDGVPTLGEGNADCRTQTIGSRSGLSCKMVNYTLQTNGLSNTSIHIFPAIANSSLASAVGAYDMQFSLNGSSWKPVSNTAYYYTFNEMKSADSIYVFFSSNFFKQMVNQGISDINTKDLFNFRFQNTTSPESGWYEFSTSNTLIIKPRDFSISIISDEYTQTPSREGYVGSGESALDFGYIVTTSGKTAADEVLIKVTGPAQVIGGRSYCVFSSDDGKAKVPFPATLSFITRNGATKTYDAGCDDSWRDMTDALWLTTPWTDISGEVGQMDKTTVKFSIPMDNAISLRTVDDNGWFGEVSASGEIHVQATWRNIN.

A signal peptide spans 1–23; it reads MRVNLLIAMIIFALIWPVTALRA.

This sequence belongs to the EcpD/MatE family. Forms polymers. Interacts with EcpA.

Its subcellular location is the fimbrium. In terms of biological role, part of the ecpRABCDE operon, which encodes the E.coli common pilus (ECP). ECP is found in both commensal and pathogenic strains and plays a dual role in early-stage biofilm development and host cell recognition. Tip pilus adhesin, which is required for assembly of EcpA into fibers. This is Fimbria adhesin EcpD (ecpD) from Escherichia coli O157:H7.